The following is a 976-amino-acid chain: Alpha-amylase (976 aa).

Positions 1–33 (MKRGKLWGRLVSAAGLSLSIFLSSIGNVSTAYA) are cleaved as a signal peptide. Residues 45-98 (TKENTESATDASSNEASDAEADNDTDEAITDASSKELSAENDGASESDSSFDEY) form a disordered region. The segment covering 50 to 60 (ESATDASSNEA) has biased composition (low complexity). Composition is skewed to acidic residues over residues 61–73 (SDAE…DEAI) and 87–96 (GASESDSSFD). N243, T284, and D293 together coordinate Ca(2+). D323 serves as the catalytic Nucleophile. Position 327 (H327) interacts with Ca(2+). E375 (proton donor) is an active-site residue.

The protein belongs to the glycosyl hydrolase 13 family. Monomer. Ca(2+) is required as a cofactor.

The enzyme catalyses Endohydrolysis of (1-&gt;4)-alpha-D-glucosidic linkages in polysaccharides containing three or more (1-&gt;4)-alpha-linked D-glucose units.. The sequence is that of Alpha-amylase (amyA) from Butyrivibrio fibrisolvens.